The primary structure comprises 184 residues: Photosystem I assembly protein Ycf4 (184 aa).

2 helical membrane passes run 21–43 (NYFW…VSSY) and 63–85 (GIVM…FTIF).

It belongs to the Ycf4 family.

It is found in the plastid. It localises to the chloroplast thylakoid membrane. Functionally, seems to be required for the assembly of the photosystem I complex. The polypeptide is Photosystem I assembly protein Ycf4 (Chaetosphaeridium globosum (Charophycean green alga)).